The primary structure comprises 242 residues: DNA repair protein RecO (242 aa).

Belongs to the RecO family.

Involved in DNA repair and RecF pathway recombination. In Vibrio atlanticus (strain LGP32) (Vibrio splendidus (strain Mel32)), this protein is DNA repair protein RecO.